The chain runs to 540 residues: [Co(II) methylated amine-specific corrinoid protein] reductase (540 aa).

2 consecutive 4Fe-4S ferredoxin-type domains span residues 471–500 (IILE…IVER) and 504–535 (RIAK…ITKL). The [4Fe-4S] cluster site is built by Cys480, Cys483, Cys486, Cys490, Cys513, Cys518, Cys521, and Cys525.

As to quaternary structure, monomer. It depends on [4Fe-4S] cluster as a cofactor.

The enzyme catalyses 2 Co(II)-[methylamine-specific corrinoid protein] + AH2 + ATP + H2O = 2 Co(I)-[methylamine-specific corrinoid protein] + A + ADP + phosphate + 3 H(+). It catalyses the reaction 2 Co(II)-[dimethylamine-specific corrinoid protein] + AH2 + ATP + H2O = 2 Co(I)-[dimethylamine-specific corrinoid protein] + A + ADP + phosphate + 3 H(+). The catalysed reaction is 2 Co(II)-[trimethylamine-specific corrinoid protein] + AH2 + ATP + H2O = 2 Co(I)-[trimethylamine-specific corrinoid protein] + A + ADP + phosphate + 3 H(+). Its pathway is one-carbon metabolism; methanogenesis from methylamine. It participates in one-carbon metabolism; methanogenesis from dimethylamine. The protein operates within one-carbon metabolism; methanogenesis from trimethylamine. Functionally, reductase required for the activation of corrinoid-dependent methylamine methyltransferase reactions during methanogenesis. Mediates the ATP-dependent reduction of corrinoid proteins from the inactive cobalt(II) state to the active cobalt(I) state. Acts on the corrinoid proteins involved in methanogenesis from monomethylamine (MMA), dimethylamine (DMA) and trimethylamine (TMA), namely MtmC, MtbC and MttC, respectively. This chain is [Co(II) methylated amine-specific corrinoid protein] reductase, found in Methanosarcina barkeri.